Consider the following 178-residue polypeptide: Large ribosomal subunit protein uL5 (178 aa).

Belongs to the universal ribosomal protein uL5 family. As to quaternary structure, part of the 50S ribosomal subunit; part of the 5S rRNA/L5/L18/L25 subcomplex. Contacts the 5S rRNA and the P site tRNA. Forms a bridge to the 30S subunit in the 70S ribosome.

This is one of the proteins that bind and probably mediate the attachment of the 5S RNA into the large ribosomal subunit, where it forms part of the central protuberance. In the 70S ribosome it contacts protein S13 of the 30S subunit (bridge B1b), connecting the 2 subunits; this bridge is implicated in subunit movement. Contacts the P site tRNA; the 5S rRNA and some of its associated proteins might help stabilize positioning of ribosome-bound tRNAs. This Aliivibrio fischeri (strain ATCC 700601 / ES114) (Vibrio fischeri) protein is Large ribosomal subunit protein uL5.